Consider the following 562-residue polypeptide: MRSDMIKKGDHQAPARSLLHATGALKSPTDMNKPFVAICNSYIDIVPGHVHLRELADIAKEAIREAGAIPFEFNTIGVDDGIAMGHIGMRYSLPSREIIADAAETVINAHWFDGVFYIPNCDKITPGMILAAMRTNVPAIFCSGGPMKAGLSAHGKALTLSSMFEAVGAFKEGSISKEEFLDMEQNACPTCGSCAGMFTANSMNCLMEVLGLALPYNGTALAVSDQRREMIRQAAFKLVENIKNDLKPRDIVTREAIDDAFALDMAMGGSTNTVLHTLAIANEAGIDYDLERINAIAKRTPYLSKIAPSSSYSMHDVHEAGGVPAIINELMKKDGTLHPDRITVTGKTLRENNEGKEIKNFDVIHPLDAPYDAQGGLSILFGNIAPKGAVIKVGGVDPSIKTFTRKAICFNSHDEAVEAIDNRTVRAGHVVVIRYEGPKGGPGMPEMLAPTSSIVGRGLGKDVALITDGRFSGATRGIAVGHISPEAASGGPIALIEDGDEITIDLTNRTLNVNQPEDVLARRRESLTPFKAKVKTGYLARYTALVTSANTGGVMQVPENLI.

Mg(2+) is bound at residue Asp-80. Cys-121 contributes to the [2Fe-2S] cluster binding site. 2 residues coordinate Mg(2+): Asp-122 and Lys-123. Lys-123 bears the N6-carboxylysine mark. Cys-194 serves as a coordination point for [2Fe-2S] cluster. Glu-446 lines the Mg(2+) pocket. Ser-472 acts as the Proton acceptor in catalysis.

The protein belongs to the IlvD/Edd family. In terms of assembly, homodimer. [2Fe-2S] cluster is required as a cofactor. The cofactor is Mg(2+).

It catalyses the reaction (2R)-2,3-dihydroxy-3-methylbutanoate = 3-methyl-2-oxobutanoate + H2O. It carries out the reaction (2R,3R)-2,3-dihydroxy-3-methylpentanoate = (S)-3-methyl-2-oxopentanoate + H2O. It participates in amino-acid biosynthesis; L-isoleucine biosynthesis; L-isoleucine from 2-oxobutanoate: step 3/4. The protein operates within amino-acid biosynthesis; L-valine biosynthesis; L-valine from pyruvate: step 3/4. Functionally, functions in the biosynthesis of branched-chain amino acids. Catalyzes the dehydration of (2R,3R)-2,3-dihydroxy-3-methylpentanoate (2,3-dihydroxy-3-methylvalerate) into 2-oxo-3-methylpentanoate (2-oxo-3-methylvalerate) and of (2R)-2,3-dihydroxy-3-methylbutanoate (2,3-dihydroxyisovalerate) into 2-oxo-3-methylbutanoate (2-oxoisovalerate), the penultimate precursor to L-isoleucine and L-valine, respectively. This is Dihydroxy-acid dehydratase from Staphylococcus aureus (strain COL).